The following is a 141-amino-acid chain: MAIERTLSIIKPDAVAKNVIGQIYARFEAAGLKVVAAKMVHLSRGEAEQFYAVHKARPFFKDLVDFMVSGPVMIQALEGESAIAKNRDLMGATDPKKAEKGTIRADFADSIDANAVHGSDAPETAAVEVAFFFPGMNVYSR.

Positions 11, 59, 87, 93, 104, and 114 each coordinate ATP. The active-site Pros-phosphohistidine intermediate is the histidine 117.

The protein belongs to the NDK family. In terms of assembly, homotetramer. Mg(2+) is required as a cofactor.

It localises to the cytoplasm. It catalyses the reaction a 2'-deoxyribonucleoside 5'-diphosphate + ATP = a 2'-deoxyribonucleoside 5'-triphosphate + ADP. It carries out the reaction a ribonucleoside 5'-diphosphate + ATP = a ribonucleoside 5'-triphosphate + ADP. Its function is as follows. Major role in the synthesis of nucleoside triphosphates other than ATP. The ATP gamma phosphate is transferred to the NDP beta phosphate via a ping-pong mechanism, using a phosphorylated active-site intermediate. In Cupriavidus metallidurans (strain ATCC 43123 / DSM 2839 / NBRC 102507 / CH34) (Ralstonia metallidurans), this protein is Nucleoside diphosphate kinase.